The sequence spans 499 residues: 3-octaprenyl-4-hydroxybenzoate carboxy-lyase (499 aa).

Residue Asn173 participates in Mn(2+) binding. Residues 176-178 (IYR), 190-192 (RWL), and 195-196 (RG) each bind prenylated FMN. Glu239 is a binding site for Mn(2+). The Proton donor role is filled by Asp288.

Belongs to the UbiD family. Homohexamer. Requires prenylated FMN as cofactor. Mn(2+) serves as cofactor.

Its subcellular location is the cell membrane. The enzyme catalyses a 4-hydroxy-3-(all-trans-polyprenyl)benzoate + H(+) = a 2-(all-trans-polyprenyl)phenol + CO2. The protein operates within cofactor biosynthesis; ubiquinone biosynthesis. Catalyzes the decarboxylation of 3-octaprenyl-4-hydroxy benzoate to 2-octaprenylphenol, an intermediate step in ubiquinone biosynthesis. In Blochmanniella floridana, this protein is 3-octaprenyl-4-hydroxybenzoate carboxy-lyase.